A 707-amino-acid polypeptide reads, in one-letter code: Polyribonucleotide nucleotidyltransferase (707 aa).

D485 and D491 together coordinate Mg(2+). Residues 552-611 (PRIYTMKIDPKKIKDVIGKGGATIRTLTEETGTSIDIDDDGTVKIAAIDGNAVKEVMARI) form the KH domain. Residues 621–689 (GAVYTGKVTR…RQGRIRLTMK (69 aa)) form the S1 motif domain.

Belongs to the polyribonucleotide nucleotidyltransferase family. As to quaternary structure, component of the RNA degradosome, which is a multiprotein complex involved in RNA processing and mRNA degradation. Requires Mg(2+) as cofactor.

The protein localises to the cytoplasm. It catalyses the reaction RNA(n+1) + phosphate = RNA(n) + a ribonucleoside 5'-diphosphate. Functionally, involved in mRNA degradation. Catalyzes the phosphorolysis of single-stranded polyribonucleotides processively in the 3'- to 5'-direction. This chain is Polyribonucleotide nucleotidyltransferase, found in Actinobacillus succinogenes (strain ATCC 55618 / DSM 22257 / CCUG 43843 / 130Z).